The chain runs to 1403 residues: Sushi, nidogen and EGF-like domain-containing protein 1 (1403 aa).

Residues 1 to 24 (MRRGAAWALLLAAALGLGARGVRA) form the signal peptide. In terms of domain architecture, NIDO spans 103–258 (AFWADVDNRR…GRWAFRIDDA (156 aa)). 3 EGF-like domains span residues 268–309 (TTSV…RRCH), 311–347 (DVNE…PTCE), and 349–385 (AQSP…ATCE). Cystine bridges form between cysteine 272/cysteine 284, cysteine 278/cysteine 297, cysteine 299/cysteine 308, cysteine 315/cysteine 326, cysteine 320/cysteine 335, cysteine 337/cysteine 346, cysteine 353/cysteine 364, cysteine 358/cysteine 373, cysteine 375/cysteine 384, cysteine 391/cysteine 402, cysteine 396/cysteine 411, cysteine 413/cysteine 422, cysteine 433/cysteine 444, cysteine 438/cysteine 453, cysteine 455/cysteine 464, cysteine 472/cysteine 480, cysteine 474/cysteine 488, and cysteine 490/cysteine 499. N-linked (GlcNAc...) asparagine glycosylation occurs at asparagine 292. The 37-residue stretch at 387-423 (DVDECSSDPCLNGGSCVDLVGNYSCICVEPFEGPQCE) folds into the EGF-like 4; calcium-binding domain. N-linked (GlcNAc...) asparagine glycosylation is present at asparagine 408. EGF-like domains are found at residues 429 to 465 (VPSP…LDCR) and 468 to 500 (ILND…LLCE). Asparagine 484 carries an N-linked (GlcNAc...) asparagine glycan. The N-linked (GlcNAc...) asparagine glycan is linked to asparagine 536. EGF-like domains are found at residues 541 to 577 (LPSP…RHCE), 580 to 616 (RPHL…RHCE), 619 to 655 (KPDS…RHCE), and 657 to 693 (APSP…HRCQ). 26 disulfides stabilise this stretch: cysteine 545–cysteine 556, cysteine 550–cysteine 565, cysteine 567–cysteine 576, cysteine 584–cysteine 595, cysteine 589–cysteine 604, cysteine 606–cysteine 615, cysteine 623–cysteine 634, cysteine 628–cysteine 643, cysteine 645–cysteine 654, cysteine 661–cysteine 672, cysteine 666–cysteine 681, cysteine 683–cysteine 692, cysteine 698–cysteine 739, cysteine 724–cysteine 751, cysteine 757–cysteine 768, cysteine 762–cysteine 777, cysteine 779–cysteine 788, cysteine 795–cysteine 806, cysteine 800–cysteine 815, cysteine 817–cysteine 826, cysteine 833–cysteine 844, cysteine 838–cysteine 853, cysteine 855–cysteine 864, cysteine 871–cysteine 882, cysteine 876–cysteine 891, and cysteine 893–cysteine 902. The 58-residue stretch at 696-753 (VDCGQPEEVKHATMRLNGTRMGSVALYTCDPGFSLSVLSHMRVCQPQGVWSQPPQCIE) folds into the Sushi domain. The N-linked (GlcNAc...) asparagine glycan is linked to asparagine 712. Residues 753–789 (EVDECQSQPCLHKGSCQDLIAGYQCLCSPGYEGVHCE) form the EGF-like 11; calcium-binding domain. The 37-residue stretch at 791 to 827 (ETDECQAQPCRNGGSCRDLPGAFICQCPEGFVGTHCE) folds into the EGF-like 12; calcium-binding domain. EGF-like domains follow at residues 829–865 (EVDA…YNCE) and 867–903 (VSDP…KDCT). Asparagine 886 is a glycosylation site (N-linked (GlcNAc...) asparagine). 3 consecutive Fibronectin type-III domains span residues 908 to 1006 (PPTA…TRPR), 1007 to 1105 (PIED…TRPL), and 1106 to 1200 (PPAN…SPRD). Residues asparagine 977, asparagine 1015, asparagine 1109, asparagine 1139, and asparagine 1298 are each glycosylated (N-linked (GlcNAc...) asparagine). Positions 1295-1314 (LPKNNSKDTESTPGSCSEDT) are disordered. The span at 1305 to 1314 (STPGSCSEDT) shows a compositional bias: polar residues. Positions 1306 to 1342 (TPGSCSEDTCQNGGTCVPGANAHSCDCRPGFKGRHCE) constitute an EGF-like 15 domain. Disulfide bonds link cysteine 1310-cysteine 1321, cysteine 1315-cysteine 1330, and cysteine 1332-cysteine 1341.

In terms of processing, phosphorylated on serine and threonine residues. Post-translationally, N-glycosylated. Expressed in liver.

Its subcellular location is the secreted. The protein resides in the extracellular space. The protein localises to the extracellular matrix. This chain is Sushi, nidogen and EGF-like domain-containing protein 1, found in Rattus norvegicus (Rat).